Here is a 652-residue protein sequence, read N- to C-terminus: Na(+)/H(+) antiporter NhaA 3 (652 aa).

The tract at residues 1–428 is na(+)/H(+) antiporter NhaA; the sequence is MTGEIPRGRR…GASLTTWLVF (428 aa). Helical transmembrane passes span 32-52, 78-98, 114-134, 142-162, 173-193, 200-220, 227-249, 306-326, 342-362, 376-396, and 411-431; these read ETGS…WVNL, LRFW…GLEV, MLPL…YLAF, VGWG…LAVL, FLLT…AIAY, MALF…AAGV, LLLG…VVGL, HPWA…GVVV, GVLF…SMLV, WAAI…ALLI, and VGIL…FRLA. The region spanning 429–623 is the Thioredoxin domain; that stretch reads RLAARLAPAR…LSAAVMSAFA (195 aa). Residues 626-652 are disordered; it reads RLRPEGGREPDHRSEAGSEQPDEEPGT. Basic and acidic residues predominate over residues 627 to 641; sequence LRPEGGREPDHRSEA.

It in the N-terminal section; belongs to the NhaA Na(+)/H(+) (TC 2.A.33) antiporter family.

Its subcellular location is the cell membrane. The catalysed reaction is Na(+)(in) + 2 H(+)(out) = Na(+)(out) + 2 H(+)(in). Functionally, na(+)/H(+) antiporter that extrudes sodium in exchange for external protons. The sequence is that of Na(+)/H(+) antiporter NhaA 3 from Salinispora tropica (strain ATCC BAA-916 / DSM 44818 / JCM 13857 / NBRC 105044 / CNB-440).